Consider the following 255-residue polypeptide: Imidazole glycerol phosphate synthase subunit HisF (255 aa).

Residues Asp11 and Asp130 contribute to the active site.

Belongs to the HisA/HisF family. As to quaternary structure, heterodimer of HisH and HisF.

The protein resides in the cytoplasm. It catalyses the reaction 5-[(5-phospho-1-deoxy-D-ribulos-1-ylimino)methylamino]-1-(5-phospho-beta-D-ribosyl)imidazole-4-carboxamide + L-glutamine = D-erythro-1-(imidazol-4-yl)glycerol 3-phosphate + 5-amino-1-(5-phospho-beta-D-ribosyl)imidazole-4-carboxamide + L-glutamate + H(+). The protein operates within amino-acid biosynthesis; L-histidine biosynthesis; L-histidine from 5-phospho-alpha-D-ribose 1-diphosphate: step 5/9. Functionally, IGPS catalyzes the conversion of PRFAR and glutamine to IGP, AICAR and glutamate. The HisF subunit catalyzes the cyclization activity that produces IGP and AICAR from PRFAR using the ammonia provided by the HisH subunit. The chain is Imidazole glycerol phosphate synthase subunit HisF from Campylobacter jejuni (strain RM1221).